A 182-amino-acid chain; its full sequence is Flavodoxin (182 aa).

In terms of domain architecture, Flavodoxin-like spans 4-173 (IGLFFGSDTG…RLKGWLSLIA (170 aa)).

Belongs to the flavodoxin family. Requires FMN as cofactor.

Functionally, low-potential electron donor to a number of redox enzymes. NifF is the electron donor to nitrogenase. In Rhodobacter capsulatus (strain ATCC BAA-309 / NBRC 16581 / SB1003), this protein is Flavodoxin (nifF).